Consider the following 253-residue polypeptide: MRKKRLLSRISFSSLFLLCGTVLSAYTGIQADLRNLIKETTKKDIDVYKAIKTTEGKKNIITSLKKSYEVNPKDTTKLLLDAWKQSFEKGELGIPDLDFEDVIYPKTSEPFKFERKVDHFQMTYQSFKDLSIEAKLSYNFNWFGDYSLGGFTAKKGDKHYFDLFLKIKSNSDPKKQFTTEKFLTKEEKNKVNGKEITRNLEWIEFSASLSWLIKGKDDVSQKSVKQFLSSYANNTSGYSRDINLFIYLEYLIK.

It belongs to the MG439/MG440 family.

This is an uncharacterized protein from Mycoplasma pneumoniae (strain ATCC 29342 / M129 / Subtype 1) (Mycoplasmoides pneumoniae).